The primary structure comprises 508 residues: Photosystem II CP47 reaction center protein (508 aa).

A run of 6 helical transmembrane segments spans residues 21 to 36 (AVHIMHTALVSGWAGS), 101 to 115 (IVFSGLCFLAAIWHW), 140 to 156 (GIHLFLAGVACFGFGAF), 203 to 218 (IAAGTLGILAGLFHLS), 237 to 252 (VLSSSIAAVFFAAFVV), and 457 to 472 (TFALLFFFGHIWHGAR).

This sequence belongs to the PsbB/PsbC family. PsbB subfamily. As to quaternary structure, PSII is composed of 1 copy each of membrane proteins PsbA, PsbB, PsbC, PsbD, PsbE, PsbF, PsbH, PsbI, PsbJ, PsbK, PsbL, PsbM, PsbT, PsbX, PsbY, PsbZ, Psb30/Ycf12, at least 3 peripheral proteins of the oxygen-evolving complex and a large number of cofactors. It forms dimeric complexes. Binds multiple chlorophylls. PSII binds additional chlorophylls, carotenoids and specific lipids. serves as cofactor.

Its subcellular location is the plastid. It is found in the chloroplast thylakoid membrane. One of the components of the core complex of photosystem II (PSII). It binds chlorophyll and helps catalyze the primary light-induced photochemical processes of PSII. PSII is a light-driven water:plastoquinone oxidoreductase, using light energy to abstract electrons from H(2)O, generating O(2) and a proton gradient subsequently used for ATP formation. This Triticum aestivum (Wheat) protein is Photosystem II CP47 reaction center protein.